We begin with the raw amino-acid sequence, 700 residues long: Polyribonucleotide nucleotidyltransferase (700 aa).

The Mg(2+) site is built by D485 and D491. Positions 552–611 (PRITTLKINPEKIRDVIGKGGATIRALTEETGTTIELEDDGTVKIASANGDATKEAIRRI) constitute a KH domain. An S1 motif domain is found at 621-689 (GTVYNGKVVR…RQGRVRLSMK (69 aa)).

This sequence belongs to the polyribonucleotide nucleotidyltransferase family. Component of the RNA degradosome, which is a multiprotein complex involved in RNA processing and mRNA degradation. Requires Mg(2+) as cofactor.

The protein resides in the cytoplasm. It carries out the reaction RNA(n+1) + phosphate = RNA(n) + a ribonucleoside 5'-diphosphate. Its function is as follows. Involved in mRNA degradation. Catalyzes the phosphorolysis of single-stranded polyribonucleotides processively in the 3'- to 5'-direction. The chain is Polyribonucleotide nucleotidyltransferase from Shewanella loihica (strain ATCC BAA-1088 / PV-4).